A 259-amino-acid polypeptide reads, in one-letter code: Peptide methionine sulfoxide reductase (259 aa).

Residues 66 to 90 (TRTPADASMDQSSIAQGPDDDIPAP) form a disordered region.

This sequence belongs to the MsrA Met sulfoxide reductase family.

The enzyme catalyses L-methionyl-[protein] + [thioredoxin]-disulfide + H2O = L-methionyl-(S)-S-oxide-[protein] + [thioredoxin]-dithiol. The catalysed reaction is [thioredoxin]-disulfide + L-methionine + H2O = L-methionine (S)-S-oxide + [thioredoxin]-dithiol. Its function is as follows. Has an important function as a repair enzyme for proteins that have been inactivated by oxidation. Catalyzes the reversible oxidation-reduction of methionine sulfoxide in proteins to methionine. This is Peptide methionine sulfoxide reductase from Lactuca sativa (Garden lettuce).